The primary structure comprises 243 residues: Pyridoxine 5'-phosphate synthase (243 aa).

3-amino-2-oxopropyl phosphate is bound at residue Asn-9. 11–12 serves as a coordination point for 1-deoxy-D-xylulose 5-phosphate; sequence DH. Arg-20 is a 3-amino-2-oxopropyl phosphate binding site. His-45 serves as the catalytic Proton acceptor. 1-deoxy-D-xylulose 5-phosphate contacts are provided by Arg-47 and His-52. The active-site Proton acceptor is the Glu-72. Thr-102 provides a ligand contact to 1-deoxy-D-xylulose 5-phosphate. The active-site Proton donor is His-193. 3-amino-2-oxopropyl phosphate is bound by residues Gly-194 and 215 to 216; that span reads GH.

It belongs to the PNP synthase family. Homooctamer; tetramer of dimers.

Its subcellular location is the cytoplasm. The enzyme catalyses 3-amino-2-oxopropyl phosphate + 1-deoxy-D-xylulose 5-phosphate = pyridoxine 5'-phosphate + phosphate + 2 H2O + H(+). It participates in cofactor biosynthesis; pyridoxine 5'-phosphate biosynthesis; pyridoxine 5'-phosphate from D-erythrose 4-phosphate: step 5/5. Its function is as follows. Catalyzes the complicated ring closure reaction between the two acyclic compounds 1-deoxy-D-xylulose-5-phosphate (DXP) and 3-amino-2-oxopropyl phosphate (1-amino-acetone-3-phosphate or AAP) to form pyridoxine 5'-phosphate (PNP) and inorganic phosphate. This chain is Pyridoxine 5'-phosphate synthase, found in Escherichia coli O6:H1 (strain CFT073 / ATCC 700928 / UPEC).